Reading from the N-terminus, the 431-residue chain is Glutamate-1-semialdehyde 2,1-aminomutase (431 aa).

K269 carries the N6-(pyridoxal phosphate)lysine modification.

The protein belongs to the class-III pyridoxal-phosphate-dependent aminotransferase family. HemL subfamily. Homodimer. Requires pyridoxal 5'-phosphate as cofactor.

It localises to the cytoplasm. It carries out the reaction (S)-4-amino-5-oxopentanoate = 5-aminolevulinate. Its pathway is porphyrin-containing compound metabolism; protoporphyrin-IX biosynthesis; 5-aminolevulinate from L-glutamyl-tRNA(Glu): step 2/2. The sequence is that of Glutamate-1-semialdehyde 2,1-aminomutase from Francisella tularensis subsp. tularensis (strain WY96-3418).